Reading from the N-terminus, the 639-residue chain is MKIINLGILAHVDAGKTTLTESLLYTSGAIAELGSVDEGTTRTDTMNLERQRGITIQTAVTSFQWEDVKVNIIDTPGHMDFLAEVYRSLSVLDGAVLLVSAKDGIQAQTRILFHALQIMKIPTIFFINKIDQEGIDLPMVYREMKAKLSSEIIVKQKVGQHPHINVTDNDDMEQWDAVIMGNDELLEKYMSGKPFKMSELEQEENRRFQNGTLFPVYHGSAKNNLGTRQLIEVIASKFYSSTPEGQSELCGQVFKIEYSEKRRRFVYVRIYSGTLHLRDVIRISEKEKIKITEMYVPTNGELYSSDTACSGDIVILPNDVLQLNSILGNEILLPQRKFIENPLPMIQTTIAVKKSEQREILLGALTEISDCDPLLKYYVDTTTHEIILSFLGNVQMEVICAILEEKYHVEAEIKEPTVIYMERPLRKAEYTIHIEVPPNPFWASVGLSIEPLPIGSGVQYESRVSLGYLNQSFQNAVMEGVLYGCEQGLYGWKVTDCKICFEYGLYYSPVSTPADFRLLSPIVLEQALKKAGTELLEPYLHFEIYAPQEYLSRAYHDAPRYCADIVSTQIKNDEVILKGEIPARCIQEYRNDLTYFTNGQGVCLTELKGYQPAIGKFICQPRRPNSRIDKVRHMFHKLA.

Residues 1-244 form the tr-type G domain; sequence MKIINLGILA…ASKFYSSTPE (244 aa). Residues 10–17, 74–78, and 128–131 each bind GTP; these read AHVDAGKT, DTPGH, and NKID.

The protein belongs to the TRAFAC class translation factor GTPase superfamily. Classic translation factor GTPase family. TetM/TetO subfamily.

Abolishes the inhibitory effect of tetracyclin on protein synthesis by a non-covalent modification of the ribosomes. This is Tetracycline resistance protein TetO (tetO) from Campylobacter jejuni.